Reading from the N-terminus, the 360-residue chain is Histidinol-phosphate aminotransferase (360 aa).

The residue at position 221 (Lys221) is an N6-(pyridoxal phosphate)lysine.

Belongs to the class-II pyridoxal-phosphate-dependent aminotransferase family. Histidinol-phosphate aminotransferase subfamily. As to quaternary structure, homodimer. Requires pyridoxal 5'-phosphate as cofactor.

The catalysed reaction is L-histidinol phosphate + 2-oxoglutarate = 3-(imidazol-4-yl)-2-oxopropyl phosphate + L-glutamate. Its pathway is amino-acid biosynthesis; L-histidine biosynthesis; L-histidine from 5-phospho-alpha-D-ribose 1-diphosphate: step 7/9. This Desulfitobacterium hafniense (strain Y51) protein is Histidinol-phosphate aminotransferase.